The chain runs to 1390 residues: MKKNSAFHNTQYSPKVVRRDYSKVHNKYNPLNLPGIQVNAYKQFLEKELEEIIGSYFPIKSPNGKYSVEFHGMKILDPQITKEEASAESKTYDASLYVNLSLVNHQTGTVKKISKKSAKSKAEGIYFADIPLMTENGAFIVNGIEKFVVAQIVRSPGAYILNKSQVKLSNSRKRNQEGYICEVFPSKGTLMLFYIAENKDFVQAVVRDVGGESAKVFSITTLLKAFGLSEIKIKEIFNNNDYILRSLESEFYNEKQILNEADIAQLIRDIESDRISKVKSLPIDQKWKNLVLDWYKLNQEKQELLNSSNPNPTKIESLNTHIGVVLRKLICEKAAKHVIQELSISTRSLDNVSQKEEISYQSILLQHFFQKKRYDLSSAGRHKFVRKLRVSERLYQRTIAQDIKDLDGNVVIKQGTLMLKEQLDLFKRLSKEKRLDIIKQIDFINPELNTQFTDVNTYEEVQIYVNNDLRNETTQIIGIDGSNESIETLTLADLISIVSYIVNLPFNIGLYDDIDHLGNKRLKLINELLKSKVQTGMMRIEKYIKDKLQTADGNNKLADQDAENDPDSDLGTKSSNDLTVKSVINPKPFQIVIKDFFNTHQLTQFLDQQNPLSELTNKRRISAMGPGGISREDPNLDIRDVHYSHYGRICPIETPEGMNIGLIMSLAFYATIDKNGFLMTPYLKVENGKITDKVEHLTALREDEYIIAEASSYMDVAKDGTINNEKIIARYRSSQDLYDPKQVDYIDVSPKQVVSVAASLIPFLENDDSSRALMGANMQRQATPLLKPYSPLVGTGVEYKIAQDSGMLVTAKNPGTVTYVDASKITVKGEDNKSTDYNLLKFVKSNKNTCYNQSPIVAVGDKIETNQALADGPSMKNGELALGQNVLVGFTTWSGYNYEDAVIISDRLFKDDVYSSIHIDEYTIECLRTKNGDEEITRDIPNISESAKRYLDEEGVIMVGAEVKEGDILVGKTSPKGQVELTPEEKLIQAILGDKVKQVRESSLKVPNGGDGIVAGIKRFSIANGDELEDDVLELVKVYVVQKRKIQIGDKVAGRHGNKGIISKIVAQEDMPHLEDGTPLDILLNPLGVPSRMNIGQIFELHLGYAARELAKAKLIEACFDKKLADQLDTVFGLEKSKTQSLIKNLVEHMKSIGVTSLAQTKNRVRTIDIDIVLKQLGLTYDDLAFKIATPVFEGVNMEDLKAIMSEAGIDPDKTEGKFKLIDGRTGEPFEKPISVGIMYMLKLDHMVDDKIHARAVGPYSKITQQPLGGKSQNGGQRFGEMEVWALQAYGAAHNLREILTIKSDDVRGRNMTYNAIVKGLSIPEPGVPESFKLLTKELQGLGMTLNVLYDDDSIENINNISVVDESLEPKIHDAEFDTFTLDDYNDDNF.

Residues 556–576 (KLADQDAENDPDSDLGTKSSN) form a disordered region.

Belongs to the RNA polymerase beta chain family. The RNAP catalytic core consists of 2 alpha, 1 beta, 1 beta' and 1 omega subunit. When a sigma factor is associated with the core the holoenzyme is formed, which can initiate transcription.

It catalyses the reaction RNA(n) + a ribonucleoside 5'-triphosphate = RNA(n+1) + diphosphate. In terms of biological role, DNA-dependent RNA polymerase catalyzes the transcription of DNA into RNA using the four ribonucleoside triphosphates as substrates. In Mycoplasmoides gallisepticum (strain R(low / passage 15 / clone 2)) (Mycoplasma gallisepticum), this protein is DNA-directed RNA polymerase subunit beta.